The primary structure comprises 219 residues: Thiopurine S-methyltransferase (219 aa).

W10, L45, E66, and R123 together coordinate S-adenosyl-L-methionine.

The protein belongs to the class I-like SAM-binding methyltransferase superfamily. TPMT family.

The protein localises to the cytoplasm. It carries out the reaction S-adenosyl-L-methionine + a thiopurine = S-adenosyl-L-homocysteine + a thiopurine S-methylether.. This Bordetella bronchiseptica (strain ATCC BAA-588 / NCTC 13252 / RB50) (Alcaligenes bronchisepticus) protein is Thiopurine S-methyltransferase.